The following is a 538-amino-acid chain: Cytochrome P450 734A4 (538 aa).

Residues Val-5–Trp-27 form a helical membrane-spanning segment. Cys-480 contributes to the heme binding site.

Belongs to the cytochrome P450 family. Heme serves as cofactor. As to expression, expressed in roots, shoot apex, leaf sheaths, leaf blades, internodes and panicles.

Its subcellular location is the membrane. Functionally, cytochrome P450 involved in brassinosteroids (BRs) inactivation and regulation of BRs homeostasis. Is a multifunctional and multisubstrate enzyme that controls the endogenous bioactive BR content both by direct inactivation of castasterone (CS) and by decreasing the levels of BR precursors. Catalyzes the oxidation of carbon 22 hydroxylated BR intermediates to produce C26 oxidized metabolites. The sequence is that of Cytochrome P450 734A4 (CYP734A4) from Oryza sativa subsp. japonica (Rice).